The following is a 320-amino-acid chain: MVSVNLEAKKIVDRMIEKADDLKIKVDKLENGSTVIDCGVNVDGSIKAGELYTGVCLGGLADVGISIPGDLSERFALPSVKIKTDFPAISTLGAQKAGWSVSVGDFFALGSGPARALSLKPAETYEEIGYQDEADVAILTLEADKLPGEDVTDMIAEECDVAAENVYVLVAPTSSLVGSIQISGRVVENGTYKMLEALHFDVNKVKYAAGIAPIAPVDPDSLKAMGKTNDAVLFGGRTYYYIESEEGDDIKSLAENLPSSASEGYGKPFYDVFREADYDFYKIDKGMFAPAEVVINDLRTGDVFRAGFVNEELLMKSFGL.

Belongs to the MCH family.

The protein resides in the cytoplasm. The enzyme catalyses 5,10-methenyl-5,6,7,8-tetrahydromethanopterin + H2O = N(5)-formyl-5,6,7,8-tetrahydromethanopterin + H(+). Its pathway is one-carbon metabolism; methanogenesis from CO(2); 5,10-methenyl-5,6,7,8-tetrahydromethanopterin from CO(2): step 3/3. In terms of biological role, catalyzes the reversible interconversion of 5-formyl-H(4)MPT to methenyl-H(4)MPT(+). The sequence is that of Methenyltetrahydromethanopterin cyclohydrolase (mch) from Methanothermobacter thermautotrophicus (strain ATCC 29096 / DSM 1053 / JCM 10044 / NBRC 100330 / Delta H) (Methanobacterium thermoautotrophicum).